The primary structure comprises 522 residues: Target of rapamycin complex 2 subunit MAPKAP1 (522 aa).

The residue at position 2 (A2) is an N-acetylalanine. The segment at 2 to 184 (AFLDNPTIIL…KKIDVYLPLH (183 aa)) is interaction with MAP3K2. Residues 2–267 (AFLDNPTIIL…GFSTLALVEK (266 aa)) are interaction with NBN. Residues 38-59 (LEKTHPPSVPGDSGSEVQGSSG) form a disordered region. T86 is modified (phosphothreonine). Phosphoserine is present on residues S128, S186, S315, and S356. The region spanning 139–267 (QSILSVRLEQ…GFSTLALVEK (129 aa)) is the CRIM domain. The tract at residues 279-353 (LFVRINAAHG…QNAWEFCLVR (75 aa)) is SIN1-type RBD. Residues 382 to 487 (HYKSFKVSMI…IVLKVNYILE (106 aa)) form the SIN1-type PH domain. R393 contributes to the a 1,2-diacyl-sn-glycero-3-phospho-(1D-myo-inositol-3,4,5-trisphosphate) binding site. Residue T398 is modified to Phosphothreonine. Positions 428 and 464 each coordinate a 1,2-diacyl-sn-glycero-3-phospho-(1D-myo-inositol-3,4,5-trisphosphate). The segment at 468–522 (FESDAATVSEIVLKVNYILESRASTARADYFAQKQRKLNRRTSFSFQKEKKSGQQ) is interaction with ATF2. S510 is subject to Phosphoserine.

This sequence belongs to the SIN1 family. In terms of assembly, component of the mechanistic target of rapamycin complex 2 (mTORC2), consisting in two heterotretramers composed of MTOR, MLST8, RICTOR and MAPKAP1/SIN1. The mTORC2 core complex associates with PRR5/PROTOR1 and/or PRR5L/PROTOR2. Contrary to mTORC1, mTORC2 does not bind to and is not sensitive to FKBP12-rapamycin. Interacts with MAP3K2. Interacts with ATF2. Interacts with MAPK8. Interacts with GTP-bound HRAS and KRAS; inhibiting their activity. Interacts with IFNAR2. Phosphorylation at Ser-128 by PKC promotes relocalization to the perinuclear region, where the mTORC2 complex specifically mediates phosphorylation of SGK1. Phosphorylated at Thr-86 by AKT1 or RPS6KB1 in the presence of growth factors; the effect of this phosphorylation is however unclear. According to two studies, phosphorylation at Thr-86 by AKT1 is part of a positive feedback loop that increases mTORC2 activation. According to another study, phosphorylation at Thr-86 and Thr-398 by RPS6KB1 promotes dissociation from the mTORC2 complex, leading to inhibit mTORC2 signaling.

Its subcellular location is the cell membrane. It is found in the endoplasmic reticulum membrane. The protein localises to the early endosome membrane. It localises to the late endosome membrane. The protein resides in the lysosome membrane. Its subcellular location is the golgi apparatus membrane. It is found in the mitochondrion outer membrane. The protein localises to the cytoplasm. It localises to the perinuclear region. The protein resides in the nucleus. With respect to regulation, phosphatidylinositol 3,4,5-trisphosphate (PI(3,4,5)P3) promotes MTOR activation by relieving MAPKAP1/SIN1-mediated inhibition of MTOR that takes place in absence of PI(3,4,5)P3. Component of the mechanistic target of rapamycin complex 2 (mTORC2), which transduces signals from growth factors to pathways involved in proliferation, cytoskeletal organization, lipogenesis and anabolic output. In response to growth factors, mTORC2 phosphorylates and activates AGC protein kinase family members, including AKT (AKT1, AKT2 and AKT3), PKC (PRKCA, PRKCB and PRKCE) and SGK1. In contrast to mTORC1, mTORC2 is nutrient-insensitive. Within the mTORC2 complex, MAPKAP1/SIN1 acts as a substrate adapter which recognizes and binds AGC protein kinase family members for phosphorylation by MTOR. mTORC2 plays a critical role in AKT1 activation by mediating phosphorylation of different sites depending on the context, such as 'Thr-450', 'Ser-473', 'Ser-477' or 'Thr-479', facilitating the phosphorylation of the activation loop of AKT1 on 'Thr-308' by PDPK1/PDK1 which is a prerequisite for full activation. mTORC2 catalyzes the phosphorylation of SGK1 at 'Ser-422' and of PRKCA on 'Ser-657'. The mTORC2 complex also phosphorylates various proteins involved in insulin signaling, such as FBXW8 and IGF2BP1. mTORC2 acts upstream of Rho GTPases to regulate the actin cytoskeleton, probably by activating one or more Rho-type guanine nucleotide exchange factors. mTORC2 promotes the serum-induced formation of stress-fibers or F-actin. MAPKAP1 inhibits MAP3K2 by preventing its dimerization and autophosphorylation. Inhibits HRAS and KRAS independently of mTORC2 complex. Enhances osmotic stress-induced phosphorylation of ATF2 and ATF2-mediated transcription. Involved in ciliogenesis, regulates cilia length through its interaction with CCDC28B independently of mTORC2 complex. This is Target of rapamycin complex 2 subunit MAPKAP1 from Rattus norvegicus (Rat).